The primary structure comprises 101 residues: NAD(P)H-quinone oxidoreductase subunit 4L, chloroplastic (101 aa).

A run of 3 helical transmembrane segments spans residues 2 to 22 (MFERVLFLSVYLFSIGIYGLI), 32 to 52 (ICLELILNSINLNLVTFSDLF), and 61 to 81 (IFAIFVIALAAAEAAIGLSIL).

Belongs to the complex I subunit 4L family. In terms of assembly, NDH is composed of at least 16 different subunits, 5 of which are encoded in the nucleus.

The protein resides in the plastid. The protein localises to the chloroplast thylakoid membrane. It carries out the reaction a plastoquinone + NADH + (n+1) H(+)(in) = a plastoquinol + NAD(+) + n H(+)(out). The catalysed reaction is a plastoquinone + NADPH + (n+1) H(+)(in) = a plastoquinol + NADP(+) + n H(+)(out). Functionally, NDH shuttles electrons from NAD(P)H:plastoquinone, via FMN and iron-sulfur (Fe-S) centers, to quinones in the photosynthetic chain and possibly in a chloroplast respiratory chain. The immediate electron acceptor for the enzyme in this species is believed to be plastoquinone. Couples the redox reaction to proton translocation, and thus conserves the redox energy in a proton gradient. The chain is NAD(P)H-quinone oxidoreductase subunit 4L, chloroplastic from Zea mays (Maize).